A 255-amino-acid chain; its full sequence is Triosephosphate isomerase (255 aa).

Position 10–12 (10–12) interacts with substrate; it reads NWK. The active-site Electrophile is the histidine 96. Glutamate 169 serves as the catalytic Proton acceptor. Substrate-binding positions include glycine 175, serine 214, and 235–236; that span reads GG.

It belongs to the triosephosphate isomerase family. As to quaternary structure, homodimer.

It localises to the cytoplasm. It carries out the reaction D-glyceraldehyde 3-phosphate = dihydroxyacetone phosphate. The protein operates within carbohydrate biosynthesis; gluconeogenesis. It participates in carbohydrate degradation; glycolysis; D-glyceraldehyde 3-phosphate from glycerone phosphate: step 1/1. Its function is as follows. Involved in the gluconeogenesis. Catalyzes stereospecifically the conversion of dihydroxyacetone phosphate (DHAP) to D-glyceraldehyde-3-phosphate (G3P). This Coxiella burnetii (strain Dugway 5J108-111) protein is Triosephosphate isomerase.